A 554-amino-acid chain; its full sequence is ATP synthase subunit alpha (554 aa).

172 to 179 (GDRKTGKT) lines the ATP pocket. Residues 528–554 (LDEEELEKESVKVKKPAPEKKAKKEQK) form a disordered region. The span at 535–554 (KESVKVKKPAPEKKAKKEQK) shows a compositional bias: basic and acidic residues.

The protein belongs to the ATPase alpha/beta chains family. F-type ATPases have 2 components, CF(1) - the catalytic core - and CF(0) - the membrane proton channel. CF(1) has five subunits: alpha(3), beta(3), gamma(1), delta(1), epsilon(1). CF(0) has three main subunits: a(1), b(2) and c(9-12). The alpha and beta chains form an alternating ring which encloses part of the gamma chain. CF(1) is attached to CF(0) by a central stalk formed by the gamma and epsilon chains, while a peripheral stalk is formed by the delta and b chains.

The protein localises to the cell membrane. It catalyses the reaction ATP + H2O + 4 H(+)(in) = ADP + phosphate + 5 H(+)(out). Produces ATP from ADP in the presence of a proton gradient across the membrane. The alpha chain is a regulatory subunit. This is ATP synthase subunit alpha from Mycolicibacterium paratuberculosis (strain ATCC BAA-968 / K-10) (Mycobacterium paratuberculosis).